The sequence spans 52 residues: Photosystem II reaction center protein M (52 aa).

Residues 6–26 form a helical membrane-spanning segment; the sequence is FGFAASLLFVGVPTIFLIGLF. A disordered region spans residues 31-52; that stretch reads DGEKSSFYSDTSKGRLSPEPKK. Residues 42 to 52 are compositionally biased toward basic and acidic residues; the sequence is SKGRLSPEPKK.

The protein belongs to the PsbM family. As to quaternary structure, PSII is composed of 1 copy each of membrane proteins PsbA, PsbB, PsbC, PsbD, PsbE, PsbF, PsbH, PsbI, PsbJ, PsbK, PsbL, PsbM, PsbT, PsbX, PsbY, Psb30/Ycf12, peripheral proteins PsbO, CyanoQ (PsbQ), PsbU, PsbV and a large number of cofactors. It forms dimeric complexes.

Its subcellular location is the cellular thylakoid membrane. One of the components of the core complex of photosystem II (PSII). PSII is a light-driven water:plastoquinone oxidoreductase that uses light energy to abstract electrons from H(2)O, generating O(2) and a proton gradient subsequently used for ATP formation. It consists of a core antenna complex that captures photons, and an electron transfer chain that converts photonic excitation into a charge separation. This subunit is found at the monomer-monomer interface. This chain is Photosystem II reaction center protein M, found in Prochlorococcus marinus (strain NATL1A).